A 252-amino-acid chain; its full sequence is MMLHAQHMPGQPGAPSLVFLHGFSGDCREWQPVGEQFHGCSRLYIDLPGHGGSTAIPVGGFADVIRLLRATLISYNILKFWLVGYSLGGRVAMMAACQGIPGLCGLVVEGGHPGLQNEQARAERRLSDGRWAERFRREPLTEVFHDWYQQPVFASLTAQQRQTLTALRSQNNGETLAAMLEATSLAAQPDLREALNALAFPFYYLCGERDSKFRALAQEVAATCHVIRNAGHNAHRENPAGVVDSLAQILRL.

Belongs to the AB hydrolase superfamily. MenH family. In terms of assembly, monomer.

It catalyses the reaction 5-enolpyruvoyl-6-hydroxy-2-succinyl-cyclohex-3-ene-1-carboxylate = (1R,6R)-6-hydroxy-2-succinyl-cyclohexa-2,4-diene-1-carboxylate + pyruvate. The protein operates within quinol/quinone metabolism; 1,4-dihydroxy-2-naphthoate biosynthesis; 1,4-dihydroxy-2-naphthoate from chorismate: step 3/7. Its pathway is quinol/quinone metabolism; menaquinone biosynthesis. Its function is as follows. Catalyzes a proton abstraction reaction that results in 2,5-elimination of pyruvate from 2-succinyl-5-enolpyruvyl-6-hydroxy-3-cyclohexene-1-carboxylate (SEPHCHC) and the formation of 2-succinyl-6-hydroxy-2,4-cyclohexadiene-1-carboxylate (SHCHC). The polypeptide is 2-succinyl-6-hydroxy-2,4-cyclohexadiene-1-carboxylate synthase (Salmonella heidelberg (strain SL476)).